Reading from the N-terminus, the 747-residue chain is MFNEITKSVTWNGKVLELSTGKIARQADGAVTVKMGNSVLLCAAVVANKAKEGIGFFPLTINYREMAYAAGKIPGGFFKREGKASDREVLVSRLIDRPIRPLFHPAFVNETHVTCTVLSYDPETPVDILAIIGASAALSLSPAPYLEIVAASKVGLIDGEFVLNPTLELLKTSQLDLVVAGTADSVMMVESEANLLSEEQMLEAVKFGFESFQPIIKIIKELAKEAKKPKFQMQDLYPASLKKEIEKLFVKEIKQAFAIKSKQERSTNLDLIHEKVLTHFVSDIENKKYSNYQIESALKSIESDILRNEILEKNRRIDGRSTTDIRQIACEIGLLPSAHGSALFTRGETQSLVSTTFGTSLDEQLVDSLDGEYKERFMLDYIFPPYSVNEAMPMKAPSRREVGHGKLAWRAINPILPNKVQFPYAIRVVAETTESNGSSSMATVCSSSLALMYAGVPIKAPVAGIAMGLVKEGKKFAVLSDILGDEDYFGDMDFKVAGTSEGITALQMDIKISGVDFKIMKAALEQARLGRLHILDQMNKIISKPNSKLGKNVPSTTTIKIDKDKIRDVIGPGGKVIKEICETSDAKIDISDDGTVSVYASDRDKLKVALDKIKAIAVEPEIGEIFNGTVMKVLDSGAFINYLGTKDGFVHISEIAEERIETVGSVLKQGDIVKVKLIGFDNKGKAKLTIKNADKDKSSNNPKQKNNVNNSKENSEPERRDSSKKRAWNEDNNSDTTEVITERKYFN.

Mg(2+) is bound by residues Asp487 and Asp493. One can recognise a KH domain in the interval 554-613 (PSTTTIKIDKDKIRDVIGPGGKVIKEICETSDAKIDISDDGTVSVYASDRDKLKVALDKI). The region spanning 623-691 (GEIFNGTVMK…NKGKAKLTIK (69 aa)) is the S1 motif domain. The segment at 691 to 747 (KNADKDKSSNNPKQKNNVNNSKENSEPERRDSSKKRAWNEDNNSDTTEVITERKYFN) is disordered. A compositionally biased stretch (low complexity) spans 699-712 (SNNPKQKNNVNNSK). Residues 730–739 (EDNNSDTTEV) are compositionally biased toward polar residues.

It belongs to the polyribonucleotide nucleotidyltransferase family. Mg(2+) serves as cofactor.

It localises to the cytoplasm. It carries out the reaction RNA(n+1) + phosphate = RNA(n) + a ribonucleoside 5'-diphosphate. Functionally, involved in mRNA degradation. Catalyzes the phosphorolysis of single-stranded polyribonucleotides processively in the 3'- to 5'-direction. This chain is Polyribonucleotide nucleotidyltransferase, found in Rickettsia akari (strain Hartford).